The following is a 779-amino-acid chain: Endonuclease MutS2 (779 aa).

An ATP-binding site is contributed by 328 to 335 (GPNTGGKT). The Smr domain maps to 704–779 (LDLRGKRYEE…GSGATIVTLG (76 aa)).

This sequence belongs to the DNA mismatch repair MutS family. MutS2 subfamily. Homodimer. Binds to stalled ribosomes, contacting rRNA.

Its function is as follows. Endonuclease that is involved in the suppression of homologous recombination and thus may have a key role in the control of bacterial genetic diversity. Functionally, acts as a ribosome collision sensor, splitting the ribosome into its 2 subunits. Detects stalled/collided 70S ribosomes which it binds and splits by an ATP-hydrolysis driven conformational change. Acts upstream of the ribosome quality control system (RQC), a ribosome-associated complex that mediates the extraction of incompletely synthesized nascent chains from stalled ribosomes and their subsequent degradation. Probably generates substrates for RQC. In Streptococcus pyogenes serotype M1, this protein is Endonuclease MutS2.